We begin with the raw amino-acid sequence, 225 residues long: ATP-dependent Clp protease proteolytic subunit (225 aa).

S123 serves as the catalytic Nucleophile. H148 is a catalytic residue.

It belongs to the peptidase S14 family. In terms of assembly, fourteen ClpP subunits assemble into 2 heptameric rings which stack back to back to give a disk-like structure with a central cavity, resembling the structure of eukaryotic proteasomes.

The protein localises to the cytoplasm. The enzyme catalyses Hydrolysis of proteins to small peptides in the presence of ATP and magnesium. alpha-casein is the usual test substrate. In the absence of ATP, only oligopeptides shorter than five residues are hydrolyzed (such as succinyl-Leu-Tyr-|-NHMec, and Leu-Tyr-Leu-|-Tyr-Trp, in which cleavage of the -Tyr-|-Leu- and -Tyr-|-Trp bonds also occurs).. Functionally, cleaves peptides in various proteins in a process that requires ATP hydrolysis. Has a chymotrypsin-like activity. Plays a major role in the degradation of misfolded proteins. In Chlorobaculum tepidum (strain ATCC 49652 / DSM 12025 / NBRC 103806 / TLS) (Chlorobium tepidum), this protein is ATP-dependent Clp protease proteolytic subunit.